The sequence spans 439 residues: ATP-dependent RNA helicase SrmB (439 aa).

The Q motif signature appears at 4-32 (SQFEQFDLSPELLKALEKKGYSRPTAIQM). Positions 35-209 (IPAAMEESDV…AERLLNDPVK (175 aa)) constitute a Helicase ATP-binding domain. 48 to 55 (APTGTGKT) provides a ligand contact to ATP. The short motif at 157–160 (DEAD) is the DEAD box element. A Helicase C-terminal domain is found at 237-387 (KLLARFIETE…GLEPRTKPPK (151 aa)). Residues 381–393 (PRTKPPKDGEVKS) are compositionally biased toward basic and acidic residues. The disordered stretch occupies residues 381–439 (PRTKPPKDGEVKSVSKKQKARIKEKREEKKKTEAKKKVKLRHKDTKNIGKRRKPSNSNV). Basic residues-rich tracts occupy residues 394 to 403 (VSKKQKARIK) and 412 to 439 (TEAKKKVKLRHKDTKNIGKRRKPSNSNV).

Belongs to the DEAD box helicase family. SrmB subfamily. As to quaternary structure, interacts with the 50S ribosomal subunit.

Its subcellular location is the cytoplasm. The enzyme catalyses ATP + H2O = ADP + phosphate + H(+). DEAD-box RNA helicase involved in the assembly of the 50S ribosomal subunit at low temperature. Exhibits RNA-stimulated ATP hydrolysis and RNA unwinding activity. This chain is ATP-dependent RNA helicase SrmB, found in Haemophilus influenzae (strain ATCC 51907 / DSM 11121 / KW20 / Rd).